The following is a 185-amino-acid chain: MKSFFLVVNILALTLPFLGAEVQNQEQPTCHKNDERFFDLKTVKYIPIYYVLNSSPRYEPIYYQHRLALLINNQHMPYQYYARPAAVRPHVQIPQWQVLPNIYPSTVVRHPCPHPSFIAIPPKKLQEITVIPKINTIATVEPTPIPTPEPTVNNAVIPDASSEFIIASTPETTTVPVTSPVVQKL.

Residues 1-20 (MKSFFLVVNILALTLPFLGA) form the signal peptide. O-linked (GalNAc...) threonine glycosylation is present at threonine 143. The residue at position 161 (serine 161) is a Phosphoserine; alternate. O-linked (GalNAc...) serine; alternate glycosylation occurs at serine 161. Threonine 178 carries O-linked (GalNAc...) threonine glycosylation. Serine 179 is subject to Phosphoserine.

Belongs to the kappa-casein family. In terms of tissue distribution, mammary gland specific. Secreted in milk.

It is found in the secreted. Functionally, kappa-casein stabilizes micelle formation, preventing casein precipitation in milk. In Equus caballus (Horse), this protein is Kappa-casein (CSN3).